The following is a 1122-amino-acid chain: Protein CAF130 (1122 aa).

Residues 1–24 (MTKKKAATNYAERQNLASEDSSGD) form a disordered region. Positions 11-24 (AERQNLASEDSSGD) are enriched in polar residues. Ser1042 is modified (phosphoserine).

As to quaternary structure, subunit of the 1.0 MDa CCR4-NOT core complex that contains CCR4, CAF1, NOT1, NOT2, NOT3, NOT4, NOT5, CAF40 and CAF130. In the complex interacts with NOT1. The core complex probably is part of a less characterized 1.9 MDa CCR4-NOT complex.

The protein resides in the cytoplasm. It localises to the nucleus. Its function is as follows. Acts as a component of the CCR4-NOT core complex, which in the nucleus seems to be a general transcription factor, and in the cytoplasm the major mRNA deadenylase involved in mRNA turnover. The sequence is that of Protein CAF130 (CAF130) from Saccharomyces cerevisiae (strain ATCC 204508 / S288c) (Baker's yeast).